Consider the following 317-residue polypeptide: Ribosomal RNA small subunit methyltransferase H (317 aa).

S-adenosyl-L-methionine-binding positions include Ala-37–His-39, Asp-56, Phe-85, Asp-106, and Gln-113.

It belongs to the methyltransferase superfamily. RsmH family.

The protein resides in the cytoplasm. It carries out the reaction cytidine(1402) in 16S rRNA + S-adenosyl-L-methionine = N(4)-methylcytidine(1402) in 16S rRNA + S-adenosyl-L-homocysteine + H(+). Functionally, specifically methylates the N4 position of cytidine in position 1402 (C1402) of 16S rRNA. The sequence is that of Ribosomal RNA small subunit methyltransferase H from Lactococcus lactis subsp. lactis (strain IL1403) (Streptococcus lactis).